A 397-amino-acid chain; its full sequence is Dual-specificity RNA methyltransferase RlmN (397 aa).

The active-site Proton acceptor is the Glu-116. A Radical SAM core domain is found at 122-366; sequence EDDRGTLCIS…SPIRKTRGDD (245 aa). Cys-129 and Cys-371 are joined by a disulfide. The [4Fe-4S] cluster site is built by Cys-136, Cys-140, and Cys-143. S-adenosyl-L-methionine is bound by residues 195 to 196, Ser-227, 249 to 251, and Asn-328; these read GE and SFH. The active-site S-methylcysteine intermediate is the Cys-371.

It belongs to the radical SAM superfamily. RlmN family. [4Fe-4S] cluster is required as a cofactor.

It is found in the cytoplasm. The enzyme catalyses adenosine(2503) in 23S rRNA + 2 reduced [2Fe-2S]-[ferredoxin] + 2 S-adenosyl-L-methionine = 2-methyladenosine(2503) in 23S rRNA + 5'-deoxyadenosine + L-methionine + 2 oxidized [2Fe-2S]-[ferredoxin] + S-adenosyl-L-homocysteine. The catalysed reaction is adenosine(37) in tRNA + 2 reduced [2Fe-2S]-[ferredoxin] + 2 S-adenosyl-L-methionine = 2-methyladenosine(37) in tRNA + 5'-deoxyadenosine + L-methionine + 2 oxidized [2Fe-2S]-[ferredoxin] + S-adenosyl-L-homocysteine. Its function is as follows. Specifically methylates position 2 of adenine 2503 in 23S rRNA and position 2 of adenine 37 in tRNAs. m2A2503 modification seems to play a crucial role in the proofreading step occurring at the peptidyl transferase center and thus would serve to optimize ribosomal fidelity. This Ruegeria sp. (strain TM1040) (Silicibacter sp.) protein is Dual-specificity RNA methyltransferase RlmN.